The sequence spans 444 residues: Xylose isomerase (444 aa).

The Mg(2+) site is built by Asp-307 and Asp-309.

This sequence belongs to the xylose isomerase family. Homotetramer. Mg(2+) serves as cofactor.

Its subcellular location is the cytoplasm. The catalysed reaction is alpha-D-xylose = alpha-D-xylulofuranose. This is Xylose isomerase from Thermotoga neapolitana (strain ATCC 49049 / DSM 4359 / NBRC 107923 / NS-E).